We begin with the raw amino-acid sequence, 421 residues long: UDP-N-acetylglucosamine 1-carboxyvinyltransferase (421 aa).

22–23 lines the phosphoenolpyruvate pocket; that stretch reads KN. Position 91 (arginine 91) interacts with UDP-N-acetyl-alpha-D-glucosamine. The active-site Proton donor is the cysteine 115. Cysteine 115 bears the 2-(S-cysteinyl)pyruvic acid O-phosphothioketal mark. Residues 120–124, aspartate 306, and isoleucine 328 contribute to the UDP-N-acetyl-alpha-D-glucosamine site; that span reads RPIDL.

The protein belongs to the EPSP synthase family. MurA subfamily.

The protein resides in the cytoplasm. The enzyme catalyses phosphoenolpyruvate + UDP-N-acetyl-alpha-D-glucosamine = UDP-N-acetyl-3-O-(1-carboxyvinyl)-alpha-D-glucosamine + phosphate. The protein operates within cell wall biogenesis; peptidoglycan biosynthesis. Its function is as follows. Cell wall formation. Adds enolpyruvyl to UDP-N-acetylglucosamine. The polypeptide is UDP-N-acetylglucosamine 1-carboxyvinyltransferase (Methylacidiphilum infernorum (isolate V4) (Methylokorus infernorum (strain V4))).